The primary structure comprises 209 residues: NAD(P)H-quinone oxidoreductase subunit I (209 aa).

4Fe-4S ferredoxin-type domains lie at 55–84 (GRIHFERPKCISCEVCVRVCPINLPVVDYE) and 95–124 (NSYSIDFGVCIFCGNCVEYCPTSCLSMTEE). 8 residues coordinate [4Fe-4S] cluster: cysteine 64, cysteine 67, cysteine 70, cysteine 74, cysteine 104, cysteine 107, cysteine 110, and cysteine 114.

The protein belongs to the complex I 23 kDa subunit family. NDH-1 is composed of at least 11 different subunits. It depends on [4Fe-4S] cluster as a cofactor.

Its subcellular location is the cell inner membrane. The enzyme catalyses a plastoquinone + NADH + (n+1) H(+)(in) = a plastoquinol + NAD(+) + n H(+)(out). It catalyses the reaction a plastoquinone + NADPH + (n+1) H(+)(in) = a plastoquinol + NADP(+) + n H(+)(out). Its function is as follows. NDH-1 shuttles electrons from an unknown electron donor, via FMN and iron-sulfur (Fe-S) centers, to quinones in the respiratory and/or the photosynthetic chain. The immediate electron acceptor for the enzyme in this species is believed to be plastoquinone. Couples the redox reaction to proton translocation, and thus conserves the redox energy in a proton gradient. The sequence is that of NAD(P)H-quinone oxidoreductase subunit I from Gloeobacter violaceus (strain ATCC 29082 / PCC 7421).